The chain runs to 1441 residues: Pleiotropic drug resistance protein TUR2 (1441 aa).

In terms of domain architecture, ABC transporter 1 spans 158 to 430 (LSALHLMPSG…FESMGFKCPE (273 aa)). Position 191–198 (191–198 (GPPGAGKT)) interacts with ATP. Residues 508–721 (ELLKACIDRE…AQNAIAVNEF (214 aa)) enclose the ABC transmembrane type-2 1 domain. 6 consecutive transmembrane segments (helical) span residues 526–546 (FVYI…MTVF), 559–579 (ATIF…NGFA), 614–634 (IPIS…VIGF), 646–666 (LLLV…AAVG), 671–691 (VADT…GFII), and 756–776 (IGVG…ILFL). The ABC transporter 2 domain occupies 843–1095 (ITFDNVKYSV…HLIKYFESID (253 aa)). Position 888-895 (888-895 (GVSGRGKT)) interacts with ATP. Residues 1168–1382 (MQCLACLWKQ…TLYGLVVSQF (215 aa)) form the ABC transmembrane type-2 2 domain. The next 7 helical transmembrane spans lie at 1187–1207 (YTAT…TIFW), 1215–1235 (TSLD…FIGI), 1275–1295 (VPHI…MIGF), 1302–1322 (FLWY…YGMM), 1332–1352 (IAAI…GFII), 1363–1383 (WYYW…SQFG), and 1413–1433 (VVGV…AFSI).

Belongs to the ABC transporter superfamily. ABCG family. PDR (TC 3.A.1.205) subfamily. Ubiquitous.

It localises to the cell membrane. May be a general defense protein. Seems involved in turion (dormant buds) formation. Confers resistance to the diterpenoid antifungal agent sclareol. The sequence is that of Pleiotropic drug resistance protein TUR2 (TUR2) from Spirodela polyrhiza (Giant duckweed).